The primary structure comprises 202 residues: Josephin-1 (202 aa).

The residue at position 15 (serine 15) is a Phosphoserine. The 180-residue stretch at 23–202 (PPQIYHEKQR…EAHQSWRTDV (180 aa)) folds into the Josephin domain. The active-site Nucleophile is the cysteine 36. The Proton acceptor role is filled by histidine 139.

As to quaternary structure, interacts with beta-actin/ACTB. Post-translationally, monoubiquitinated. Ubiquitination activates deubiquitination activity in vitro.

The protein localises to the cell membrane. It localises to the cytoplasm. It carries out the reaction Thiol-dependent hydrolysis of ester, thioester, amide, peptide and isopeptide bonds formed by the C-terminal Gly of ubiquitin (a 76-residue protein attached to proteins as an intracellular targeting signal).. Deubiquitinates monoubiquitinated probes (in vitro). When ubiquitinated, cleaves 'Lys-63'-linked and 'Lys-48'-linked poly-ubiquitin chains (in vitro), hence may act as a deubiquitinating enzyme. May increase macropinocytosis and suppress clathrin- and caveolae-mediated endocytosis. May enhance membrane dynamics and cell motility independently of its catalytic activity. This chain is Josephin-1 (JOSD1), found in Pongo abelii (Sumatran orangutan).